The chain runs to 482 residues: Cysteine--tRNA ligase (482 aa).

Cysteine 29 is a Zn(2+) binding site. Positions 31–41 (VTVYDYCHLGH) match the 'HIGH' region motif. Residues cysteine 213, histidine 238, and glutamate 242 each contribute to the Zn(2+) site. A 'KMSKS' region motif is present at residues 275-279 (KMSKS). Residue lysine 278 coordinates ATP.

This sequence belongs to the class-I aminoacyl-tRNA synthetase family. In terms of assembly, monomer. Zn(2+) serves as cofactor.

The protein localises to the cytoplasm. It carries out the reaction tRNA(Cys) + L-cysteine + ATP = L-cysteinyl-tRNA(Cys) + AMP + diphosphate. The protein is Cysteine--tRNA ligase of Gloeobacter violaceus (strain ATCC 29082 / PCC 7421).